We begin with the raw amino-acid sequence, 257 residues long: Snake venom serine protease serpentokallikrein-2 (257 aa).

The signal sequence occupies residues 1 to 18 (MVLIRVLANLLILQLSYA). Positions 19 to 24 (QKSSEL) are excised as a propeptide. In terms of domain architecture, Peptidase S1 spans 25–248 (VIGGDECNIN…HLDWIKGIIA (224 aa)). 6 disulfide bridges follow: C31–C162, C49–C65, C97–C255, C141–C209, C173–C188, and C199–C224. H64 (charge relay system) is an active-site residue. N102 carries an N-linked (GlcNAc...) asparagine glycan. The active-site Charge relay system is D109. S203 acts as the Charge relay system in catalysis.

The protein belongs to the peptidase S1 family. Snake venom subfamily. As to quaternary structure, monomer. Expressed by the venom gland.

It localises to the secreted. Snake venom serine protease that may act in the hemostasis system of the prey. The chain is Snake venom serine protease serpentokallikrein-2 from Protobothrops mucrosquamatus (Taiwan habu).